An 87-amino-acid polypeptide reads, in one-letter code: MANSAQARKRARQSLKARAHNASLRTAYRTAVKKVIKAVEAGDKAAAQAQLVTSTSIMDRIADKGVFHKNKASRQKSRLSAAIKAMA.

The tract at residues 1–22 (MANSAQARKRARQSLKARAHNA) is disordered. Residues 7 to 19 (ARKRARQSLKARA) are compositionally biased toward basic residues.

The protein belongs to the bacterial ribosomal protein bS20 family.

Functionally, binds directly to 16S ribosomal RNA. This chain is Small ribosomal subunit protein bS20, found in Laribacter hongkongensis (strain HLHK9).